Reading from the N-terminus, the 944-residue chain is Translation initiation factor IF-2 (944 aa).

Disordered stretches follow at residues 61–157 (IQAN…KAKQ) and 173–281 (TQSN…SHKI). The span at 132 to 150 (TFENQTPPTENTPKVVSHS) shows a compositional bias: polar residues. Positions 175–185 (SNANNASNANN) are enriched in low complexity. Basic and acidic residues predominate over residues 186–203 (AKKEISEVKKQEQEIKRH). Residues 204 to 215 (ENIKRRTGFRVI) are compositionally biased toward basic residues. Residues 244-259 (EDIKKEWQEKDKQEAK) show a composition bias toward basic and acidic residues. The tr-type G domain maps to 443–612 (ERPPVVTIMG…LIQAGIMELK (170 aa)). Positions 452–459 (GHVDHGKT) are G1. Position 452–459 (452–459 (GHVDHGKT)) interacts with GTP. Positions 477 to 481 (GITQH) are G2. The interval 498-501 (DTPG) is G3. GTP-binding positions include 498-502 (DTPGH) and 552-555 (NKMD). A G4 region spans residues 552-555 (NKMD). A G5 region spans residues 588–590 (SAK).

It belongs to the TRAFAC class translation factor GTPase superfamily. Classic translation factor GTPase family. IF-2 subfamily.

It is found in the cytoplasm. Functionally, one of the essential components for the initiation of protein synthesis. Protects formylmethionyl-tRNA from spontaneous hydrolysis and promotes its binding to the 30S ribosomal subunits. Also involved in the hydrolysis of GTP during the formation of the 70S ribosomal complex. The sequence is that of Translation initiation factor IF-2 (infB) from Helicobacter pylori (strain ATCC 700392 / 26695) (Campylobacter pylori).